The following is a 495-amino-acid chain: Averantin hydroxylase (495 aa).

The chain crosses the membrane as a helical span at residues 12–32 (ILLLIVLTVLTPPSLALYRLW). N-linked (GlcNAc...) asparagine glycans are attached at residues Asn258 and Asn289. Cys436 contacts heme.

Belongs to the cytochrome P450 family. The cofactor is heme.

The protein resides in the membrane. It carries out the reaction (1'S)-averantin + reduced [NADPH--hemoprotein reductase] + O2 = (1'S,5'R)-5'-hydroxyaverantin + oxidized [NADPH--hemoprotein reductase] + H2O. The enzyme catalyses (1'S)-averantin + reduced [NADPH--hemoprotein reductase] + O2 = (1'S,5'S)-5'-hydroxyaverantin + oxidized [NADPH--hemoprotein reductase] + H2O + H(+). Its pathway is mycotoxin biosynthesis; aflatoxin biosynthesis. Its function is as follows. Averantin hydroxylase; part of the gene cluster that mediates the biosynthesis of aflatoxins, a group of polyketide-derived furanocoumarins, and part of the most toxic and carcinogenic compounds among the known mycotoxins. The four major aflatoxins produced by A.parasiticus are aflatoxin B1 (AFB1), aflatoxin B2 (AFB2), aflatoxin G1 (AFG1) and aflatoxin G2 (AFG2). Within the aflatoxin pathway, the cytochrome P450 monooxygenase aflG catalyzes the hydroxylation of AVN to 5'hydroxyaverantin (HAVN). The biosynthesis of aflatoxins begins with the norsolorinic acid synthase aflC that combines a hexanoyl starter unit produced by the fatty acid synthase aflA/aflB and 7 malonyl-CoA extender units to synthesize the precursor NOR. The second step is the conversion of NOR to averantin and requires the norsolorinic acid ketoreductase aflD, which catalyzes the dehydration of norsolorinic acid to form (1'S)-averantin. The norsolorinic acid reductases aflE and aflF may also play a role in the conversion of NOR to AVN. The cytochrome P450 monooxygenase aflG then catalyzes the hydroxylation of AVN to 5'hydroxyaverantin (HAVN). The next step is performed by the 5'-hydroxyaverantin dehydrogenase aflH that transforms HAVN to 5'-oxoaverantin (OAVN) which is further converted to averufin (AVF) by aflK that plays a dual role in the pathway, as a 5'-oxoaverantin cyclase that mediates conversion of 5'-oxoaverantin, as well as a versicolorin B synthase in a later step in the pathway. The averufin oxidase aflI catalyzes the conversion of AVF to versiconal hemiacetal acetate (VHA). VHA is then the substrate for the versiconal hemiacetal acetate esterase aflJ to yield versiconal (VAL). Versicolorin B synthase aflK then converts VAL to versicolorin B (VERB) by closing the bisfuran ring of aflatoxin which is required for DNA-binding, thus giving to aflatoxin its activity as a mutagen. Then, the activity of the versicolorin B desaturase aflL leads to versicolorin A (VERA). A branch point starts from VERB since it can also be converted to dihydrodemethylsterigmatocystin (DMDHST), probably also by aflL, VERA being a precursor for aflatoxins B1 and G1, and DMDHST for aflatoxins B2 and G2. Next, the versicolorin reductase aflM and the cytochrome P450 monooxygenase aflN are involved in conversion of VERA to demethylsterigmatocystin (DMST). AflX and aflY seem also involved in this step, through probable aflX-mediated epoxide ring-opening step following versicolorin A oxidation and aflY-mediated Baeyer-Villiger oxidation required for the formation of the xanthone ring. The methyltransferase aflO then leads to the modification of DMST to sterigmatocystin (ST), and of DMDHST to dihydrosterigmatocystin (DHST). Both ST and DHST are then substrates of the O-methyltransferase aflP to yield O-methylsterigmatocystin (OMST) and dihydro-O-methylsterigmatocystin (DHOMST), respectively. Finally OMST is converted to aflatoxins B1 and G1, and DHOMST to aflatoxins B2 and G2, via the action of several enzymes including O-methylsterigmatocystin oxidoreductase aflQ, the cytochrome P450 monooxygenase aflU, but also the NADH-dependent flavin oxidoreductase nadA which is specifically required for the synthesis of AFG1. This Aspergillus parasiticus (strain ATCC 56775 / NRRL 5862 / SRRC 143 / SU-1) protein is Averantin hydroxylase.